The primary structure comprises 402 residues: Flavohemoprotein (402 aa).

In terms of domain architecture, Globin spans methionine 1–arginine 138. Histidine 85 is a heme b binding site. Catalysis depends on charge relay system residues tyrosine 95 and glutamate 137. The tract at residues glycine 149–alanine 402 is reductase. An FAD-binding FR-type domain is found at threonine 152–aspartate 261. Residues tyrosine 190 and arginine 206–serine 209 each bind FAD. Glycine 274 to proline 279 serves as a coordination point for NADP(+). Valine 395–threonine 398 is a binding site for FAD.

This sequence belongs to the globin family. Two-domain flavohemoproteins subfamily. The protein in the C-terminal section; belongs to the flavoprotein pyridine nucleotide cytochrome reductase family. Heme b serves as cofactor. Requires FAD as cofactor.

It catalyses the reaction 2 nitric oxide + NADPH + 2 O2 = 2 nitrate + NADP(+) + H(+). The catalysed reaction is 2 nitric oxide + NADH + 2 O2 = 2 nitrate + NAD(+) + H(+). Its function is as follows. Is involved in NO detoxification in an aerobic process, termed nitric oxide dioxygenase (NOD) reaction that utilizes O(2) and NAD(P)H to convert NO to nitrate, which protects the bacterium from various noxious nitrogen compounds. Therefore, plays a central role in the inducible response to nitrosative stress. The chain is Flavohemoprotein from Bordetella pertussis (strain Tohama I / ATCC BAA-589 / NCTC 13251).